Reading from the N-terminus, the 347-residue chain is S-adenosylmethionine:tRNA ribosyltransferase-isomerase (347 aa).

It belongs to the QueA family. In terms of assembly, monomer.

The protein localises to the cytoplasm. The enzyme catalyses 7-aminomethyl-7-carbaguanosine(34) in tRNA + S-adenosyl-L-methionine = epoxyqueuosine(34) in tRNA + adenine + L-methionine + 2 H(+). It functions in the pathway tRNA modification; tRNA-queuosine biosynthesis. Its function is as follows. Transfers and isomerizes the ribose moiety from AdoMet to the 7-aminomethyl group of 7-deazaguanine (preQ1-tRNA) to give epoxyqueuosine (oQ-tRNA). In Pseudomonas paraeruginosa (strain DSM 24068 / PA7) (Pseudomonas aeruginosa (strain PA7)), this protein is S-adenosylmethionine:tRNA ribosyltransferase-isomerase.